We begin with the raw amino-acid sequence, 504 residues long: Maturase K (504 aa).

Belongs to the intron maturase 2 family. MatK subfamily.

It localises to the plastid. It is found in the chloroplast. Usually encoded in the trnK tRNA gene intron. Probably assists in splicing its own and other chloroplast group II introns. The sequence is that of Maturase K from Erythrina crista-galli (Cockspur coral tree).